The following is a 459-amino-acid chain: Ribulose bisphosphate carboxylase (459 aa).

N111 serves as a coordination point for substrate. The active-site Proton acceptor is K166. K168 is a substrate binding site. Mg(2+) is bound by residues K191, D193, and E194. The residue at position 191 (K191) is an N6-carboxylysine. H287 (proton acceptor) is an active-site residue. Positions 288, 321, and 368 each coordinate substrate.

This sequence belongs to the RuBisCO large chain family. Type II subfamily. In terms of assembly, homodimer. The cofactor is Mg(2+).

It carries out the reaction 2 (2R)-3-phosphoglycerate + 2 H(+) = D-ribulose 1,5-bisphosphate + CO2 + H2O. It catalyses the reaction D-ribulose 1,5-bisphosphate + O2 = 2-phosphoglycolate + (2R)-3-phosphoglycerate + 2 H(+). RuBisCO catalyzes two reactions: the carboxylation of D-ribulose 1,5-bisphosphate, the primary event in carbon dioxide fixation, as well as the oxidative fragmentation of the pentose substrate. Both reactions occur simultaneously and in competition at the same active site. This is Ribulose bisphosphate carboxylase from Albidiferax ferrireducens (strain ATCC BAA-621 / DSM 15236 / T118) (Rhodoferax ferrireducens).